A 400-amino-acid polypeptide reads, in one-letter code: Mannitol-1-phosphate 5-dehydrogenase (400 aa).

Residue 12–23 participates in NAD(+) binding; the sequence is AVHFGAGNIGRG. Residue K221 is part of the active site.

It belongs to the mannitol dehydrogenase family. In terms of assembly, monomer.

The enzyme catalyses D-mannitol 1-phosphate + NAD(+) = beta-D-fructose 6-phosphate + NADH + H(+). Catalyzes the NAD(H)-dependent interconversion of D-fructose 6-phosphate and D-mannitol 1-phosphate in the mannitol metabolic pathway. This chain is Mannitol-1-phosphate 5-dehydrogenase, found in Pyricularia oryzae (strain Y34) (Rice blast fungus).